The following is a 98-amino-acid chain: Cobalt transport protein CbiN (98 aa).

Transmembrane regions (helical) follow at residues 6 to 26 (VLMI…YSGL) and 68 to 88 (SLLF…FFGY).

It belongs to the CbiN family. Forms an energy-coupling factor (ECF) transporter complex composed of an ATP-binding protein (A component, CbiO), a transmembrane protein (T component, CbiQ) and 2 possible substrate-capture proteins (S components, CbiM and CbiN) of unknown stoichimetry.

The protein resides in the cell membrane. The protein operates within cofactor biosynthesis; adenosylcobalamin biosynthesis. Functionally, part of the energy-coupling factor (ECF) transporter complex CbiMNOQ involved in cobalt import. This chain is Cobalt transport protein CbiN, found in Methanococcus maripaludis (strain DSM 14266 / JCM 13030 / NBRC 101832 / S2 / LL).